A 252-amino-acid chain; its full sequence is Small ribosomal subunit protein eS4 (252 aa).

An S4 RNA-binding domain is found at 43 to 105; that stretch reads FPLLIIVRDI…TGETYRVIPV (63 aa).

It belongs to the eukaryotic ribosomal protein eS4 family.

In Staphylothermus marinus (strain ATCC 43588 / DSM 3639 / JCM 9404 / F1), this protein is Small ribosomal subunit protein eS4.